A 552-amino-acid chain; its full sequence is Dihydroxy-acid dehydratase (552 aa).

[2Fe-2S] cluster is bound at residue C46. D78 provides a ligand contact to Mg(2+). C119 serves as a coordination point for [2Fe-2S] cluster. 2 residues coordinate Mg(2+): D120 and K121. Position 121 is an N6-carboxylysine (K121). A [2Fe-2S] cluster-binding site is contributed by C191. E442 contributes to the Mg(2+) binding site. Catalysis depends on S468, which acts as the Proton acceptor.

This sequence belongs to the IlvD/Edd family. As to quaternary structure, homodimer. The cofactor is [2Fe-2S] cluster. Mg(2+) serves as cofactor.

The enzyme catalyses (2R)-2,3-dihydroxy-3-methylbutanoate = 3-methyl-2-oxobutanoate + H2O. It catalyses the reaction (2R,3R)-2,3-dihydroxy-3-methylpentanoate = (S)-3-methyl-2-oxopentanoate + H2O. The protein operates within amino-acid biosynthesis; L-isoleucine biosynthesis; L-isoleucine from 2-oxobutanoate: step 3/4. It functions in the pathway amino-acid biosynthesis; L-valine biosynthesis; L-valine from pyruvate: step 3/4. Its function is as follows. Functions in the biosynthesis of branched-chain amino acids. Catalyzes the dehydration of (2R,3R)-2,3-dihydroxy-3-methylpentanoate (2,3-dihydroxy-3-methylvalerate) into 2-oxo-3-methylpentanoate (2-oxo-3-methylvalerate) and of (2R)-2,3-dihydroxy-3-methylbutanoate (2,3-dihydroxyisovalerate) into 2-oxo-3-methylbutanoate (2-oxoisovalerate), the penultimate precursor to L-isoleucine and L-valine, respectively. In Picrophilus torridus (strain ATCC 700027 / DSM 9790 / JCM 10055 / NBRC 100828 / KAW 2/3), this protein is Dihydroxy-acid dehydratase.